The chain runs to 708 residues: Polyribonucleotide nucleotidyltransferase (708 aa).

Mg(2+)-binding residues include aspartate 486 and aspartate 492. The KH domain maps to proline 553 to isoleucine 612. The region spanning glycine 622–lysine 690 is the S1 motif domain.

The protein belongs to the polyribonucleotide nucleotidyltransferase family. Requires Mg(2+) as cofactor.

Its subcellular location is the cytoplasm. It catalyses the reaction RNA(n+1) + phosphate = RNA(n) + a ribonucleoside 5'-diphosphate. Its function is as follows. Involved in mRNA degradation. Catalyzes the phosphorolysis of single-stranded polyribonucleotides processively in the 3'- to 5'-direction. This chain is Polyribonucleotide nucleotidyltransferase, found in Nitrosomonas europaea (strain ATCC 19718 / CIP 103999 / KCTC 2705 / NBRC 14298).